Reading from the N-terminus, the 326-residue chain is Transposase InsH for insertion sequence element IS5H (326 aa).

It belongs to the transposase 11 family.

Involved in the transposition of the insertion sequence IS5. The chain is Transposase InsH for insertion sequence element IS5H (insH6) from Escherichia coli (strain K12).